The sequence spans 172 residues: uncharacterized protein (172 aa).

In terms of domain architecture, PfpI endopeptidase spans 3-171 (KKVAIILTNE…FNREIVNQLN (169 aa)).

It belongs to the peptidase C56 family.

This is an uncharacterized protein from Staphylococcus saprophyticus subsp. saprophyticus (strain ATCC 15305 / DSM 20229 / NCIMB 8711 / NCTC 7292 / S-41).